Consider the following 87-residue polypeptide: Chaperone NapD (87 aa).

The protein belongs to the NapD family. Interacts with the cytoplasmic NapA precursor.

The protein resides in the cytoplasm. Chaperone for NapA, the catalytic subunit of the periplasmic nitrate reductase. It binds directly and specifically to the twin-arginine signal peptide of NapA, preventing premature interaction with the Tat translocase and premature export. This Escherichia coli O157:H7 protein is Chaperone NapD.